The sequence spans 943 residues: Isoleucine--tRNA ligase (943 aa).

Positions 58-68 match the 'HIGH' region motif; sequence PYANGTIHIGH. L-isoleucyl-5'-AMP is bound at residue Glu567. The short motif at 608–612 is the 'KMSKS' region element; sequence KMSKS. Lys611 contributes to the ATP binding site. The Zn(2+) site is built by Cys906, Cys909, Cys926, and Cys929.

It belongs to the class-I aminoacyl-tRNA synthetase family. IleS type 1 subfamily. As to quaternary structure, monomer. The cofactor is Zn(2+).

The protein resides in the cytoplasm. It carries out the reaction tRNA(Ile) + L-isoleucine + ATP = L-isoleucyl-tRNA(Ile) + AMP + diphosphate. Catalyzes the attachment of isoleucine to tRNA(Ile). As IleRS can inadvertently accommodate and process structurally similar amino acids such as valine, to avoid such errors it has two additional distinct tRNA(Ile)-dependent editing activities. One activity is designated as 'pretransfer' editing and involves the hydrolysis of activated Val-AMP. The other activity is designated 'posttransfer' editing and involves deacylation of mischarged Val-tRNA(Ile). The sequence is that of Isoleucine--tRNA ligase from Pseudomonas fluorescens (strain SBW25).